Here is a 229-residue protein sequence, read N- to C-terminus: Ribosome maturation factor RimM (229 aa).

A disordered region spans residues 1–39 (MAGHDSGSAKRGRSPSFGVFVRKPVERAPTKGAGDGAAD). One can recognise a PRC barrel domain in the interval 148 to 229 (ADEFYWVDLI…RIVVDWEADY (82 aa)).

The protein belongs to the RimM family. In terms of assembly, binds ribosomal protein uS19.

Its subcellular location is the cytoplasm. Its function is as follows. An accessory protein needed during the final step in the assembly of 30S ribosomal subunit, possibly for assembly of the head region. Essential for efficient processing of 16S rRNA. May be needed both before and after RbfA during the maturation of 16S rRNA. It has affinity for free ribosomal 30S subunits but not for 70S ribosomes. This Burkholderia thailandensis (strain ATCC 700388 / DSM 13276 / CCUG 48851 / CIP 106301 / E264) protein is Ribosome maturation factor RimM.